We begin with the raw amino-acid sequence, 301 residues long: Porphobilinogen deaminase (301 aa).

C240 carries the post-translational modification S-(dipyrrolylmethanemethyl)cysteine.

The protein belongs to the HMBS family. As to quaternary structure, monomer. Dipyrromethane is required as a cofactor.

It carries out the reaction 4 porphobilinogen + H2O = hydroxymethylbilane + 4 NH4(+). It functions in the pathway porphyrin-containing compound metabolism; protoporphyrin-IX biosynthesis; coproporphyrinogen-III from 5-aminolevulinate: step 2/4. Functionally, tetrapolymerization of the monopyrrole PBG into the hydroxymethylbilane pre-uroporphyrinogen in several discrete steps. This chain is Porphobilinogen deaminase, found in Clostridioides difficile (strain 630) (Peptoclostridium difficile).